Consider the following 235-residue polypeptide: Probable transcriptional regulatory protein Cla_1081 (235 aa).

This sequence belongs to the TACO1 family.

It localises to the cytoplasm. The protein is Probable transcriptional regulatory protein Cla_1081 of Campylobacter lari (strain RM2100 / D67 / ATCC BAA-1060).